The following is a 60-amino-acid chain: Large ribosomal subunit protein bL33 (60 aa).

Belongs to the bacterial ribosomal protein bL33 family.

This is Large ribosomal subunit protein bL33 from Pelodictyon phaeoclathratiforme (strain DSM 5477 / BU-1).